Reading from the N-terminus, the 609-residue chain is Dihydroxy-acid dehydratase (609 aa).

Aspartate 81 provides a ligand contact to Mg(2+). Cysteine 122 is a binding site for [2Fe-2S] cluster. Residues aspartate 123 and lysine 124 each coordinate Mg(2+). Lysine 124 is modified (N6-carboxylysine). Cysteine 195 is a [2Fe-2S] cluster binding site. Glutamate 491 contacts Mg(2+). Catalysis depends on serine 517, which acts as the Proton acceptor.

It belongs to the IlvD/Edd family. As to quaternary structure, homodimer. [2Fe-2S] cluster serves as cofactor. The cofactor is Mg(2+).

It carries out the reaction (2R)-2,3-dihydroxy-3-methylbutanoate = 3-methyl-2-oxobutanoate + H2O. The enzyme catalyses (2R,3R)-2,3-dihydroxy-3-methylpentanoate = (S)-3-methyl-2-oxopentanoate + H2O. It participates in amino-acid biosynthesis; L-isoleucine biosynthesis; L-isoleucine from 2-oxobutanoate: step 3/4. The protein operates within amino-acid biosynthesis; L-valine biosynthesis; L-valine from pyruvate: step 3/4. Functionally, functions in the biosynthesis of branched-chain amino acids. Catalyzes the dehydration of (2R,3R)-2,3-dihydroxy-3-methylpentanoate (2,3-dihydroxy-3-methylvalerate) into 2-oxo-3-methylpentanoate (2-oxo-3-methylvalerate) and of (2R)-2,3-dihydroxy-3-methylbutanoate (2,3-dihydroxyisovalerate) into 2-oxo-3-methylbutanoate (2-oxoisovalerate), the penultimate precursor to L-isoleucine and L-valine, respectively. The polypeptide is Dihydroxy-acid dehydratase (Acinetobacter baumannii (strain ACICU)).